Here is a 254-residue protein sequence, read N- to C-terminus: PAXIP1-associated glutamate-rich protein 1 (254 aa).

Disordered regions lie at residues Met1–Glu111 and Leu127–Tyr254. The segment covering Lys45–Ser62 has biased composition (basic and acidic residues). Positions Glu78 to Leu98 are enriched in acidic residues. Residues Tyr116–Glu160 form a sufficient for interaction with NCOA1 region. Thr138 carries the phosphothreonine modification. The segment covering Gln142–Glu159 has biased composition (acidic residues). A phosphoserine mark is found at Ser143 and Ser148. Residues Lys161–Tyr254 form a sufficient for interaction with ESR1 region. A compositionally biased stretch (basic and acidic residues) spans Gln195 to Arg223. Residue Ser237 is modified to Phosphoserine.

As to quaternary structure, component of the KMT2 family MLL2/MLL3 complex (also named ASCOM complex), at least composed of the HMTs KMT2D and/or KMT2C, the common subunits ASH2L, RBBP5, WDR5 and DPY30, and the complex type-specific subunits PAXIP1/PTIP, PAGR1, NCOA6 and KDM6A; PAXIP1 is required for the association with the MLL2/MLL3 complex. Forms a constitutive complex with PAXIP1/PTIP independently of the MLL2/MLL3 complex. Interacts with NCOA1, ESR1, NR3C1, AR. In terms of tissue distribution, ubiquitously expressed.

Its subcellular location is the nucleus. Its association with the histone methyltransferase MLL2/MLL3 complex is suggesting a role in epigenetic transcriptional activation. However, in association with PAXIP1/PTIP is proposed to function at least in part independently of the MLL2/MLL3 complex. Proposed to be recruited by PAXIP1 to sites of DNA damage where the PAGR1:PAXIP1 complex is required for cell survival in response to DNA damage independently of the MLL2/MLL3 complex. However, its function in DNA damage has been questioned. During immunoglobulin class switching in activated B-cells is involved in transcription regulation of downstream switch regions at the immunoglobulin heavy-chain (Igh) locus independently of the MLL2/MLL3 complex. Involved in both estrogen receptor-regulated gene transcription and estrogen-stimulated G1/S cell-cycle transition. Acts as a transcriptional cofactor for nuclear hormone receptors. Inhibits the induction properties of several steroid receptors such as NR3C1, AR and PPARG; the mechanism of inhibition appears to be gene-dependent. This chain is PAXIP1-associated glutamate-rich protein 1 (PAGR1), found in Homo sapiens (Human).